A 411-amino-acid chain; its full sequence is KIN17-like protein (411 aa).

The C2H2-type zinc-finger motif lies at 28–50 (CQMCQKQCRDENGFKCHCMSESH). Residues 51–160 (QRQMQVFGQN…KERLKNKRVK (110 aa)) are winged helix-turn-helix (wHTH). Residues 147-183 (ETLFKERLKNKRVKSDLAEEEKQEREIQRQIERAAEK) adopt a coiled-coil conformation. 2 disordered regions span residues 182-211 (EKLNGGGGEGETSGNDEVVDDGDDERKKDE) and 232-286 (VATG…EEEK). The span at 253–286 (KVERGEKRKRSGDSGRSEKERRSALDELMKEEEK) shows a compositional bias: basic and acidic residues. Positions 259–262 (KRKR) match the Nuclear localization signal (NLS) motif. The stretch at 265–294 (DSGRSEKERRSALDELMKEEEKKKERMNRK) forms a coiled coil. The segment at 301 to 352 (GIIVKVMSKALAEKGYYKQKGVVKKVIDNYVGEIKMLDSKHVLRVDQKELET) is C-terminal subdomain A. The tract at residues 358–409 (GGMVKIVNGAYRGSNARLLGVDTEKFCAKVQIEKGVYDGRVIKSIEYEDICK) is C-terminal subdomain B.

Belongs to the KIN17 family. Interacts with SPL7. Expressed in root vasculature, lateral roots, cotyledons, rosette leaves, cauline leaves, stems, sepals, style of pistils, mature pollen grains and siliques.

Its subcellular location is the nucleus speckle. Its function is as follows. Promotes the copper deficiency response by direct interaction with SPL7. Acts with SPL7 in a common pathway to promote copper-responsive genes and alleviate oxidative stress during copper-limiting periods. May promote SPL7 function when copper is limiting. Participates in the control of general plant growth and development, and in the response to counteract the negative effects of UV radiation. This is KIN17-like protein from Arabidopsis thaliana (Mouse-ear cress).